The sequence spans 583 residues: Pectinesterase/pectinesterase inhibitor U1 (583 aa).

Residues 1–40 form the signal peptide; it reads MTRVEDFFSKQIDFCKRKKKIYLAIVASVLLVAAVIGVVA. The tract at residues 60–221 is pectinesterase inhibitor U1; the sequence is SSAHAIVKSA…EKMCSNALAM (162 aa). 3 N-linked (GlcNAc...) asparagine glycosylation sites follow: N85, N105, and N224. The interval 272–570 is pectinesterase U1; the sequence is DVVVAADGSG…TPGRFIAGGS (299 aa). Residues T347 and Q377 each coordinate substrate. Residue D400 is the Proton donor; for pectinesterase activity of the active site. C414 and C434 are joined by a disulfide. Residue D421 is the Nucleophile; for pectinesterase activity of the active site. 2 residues coordinate substrate: R489 and W491.

In the N-terminal section; belongs to the PMEI family. It in the C-terminal section; belongs to the pectinesterase family.

The protein resides in the secreted. It is found in the cell wall. It carries out the reaction [(1-&gt;4)-alpha-D-galacturonosyl methyl ester](n) + n H2O = [(1-&gt;4)-alpha-D-galacturonosyl](n) + n methanol + n H(+). It participates in glycan metabolism; pectin degradation; 2-dehydro-3-deoxy-D-gluconate from pectin: step 1/5. Its function is as follows. Acts in the modification of cell walls via demethylesterification of cell wall pectin. The chain is Pectinesterase/pectinesterase inhibitor U1 (PMEU1) from Solanum lycopersicum (Tomato).